We begin with the raw amino-acid sequence, 191 residues long: Pyridoxal 5'-phosphate synthase subunit PdxT (191 aa).

46 to 48 (GES) is an L-glutamine binding site. C78 serves as the catalytic Nucleophile. Residues R105 and 133–134 (IR) contribute to the L-glutamine site. Active-site charge relay system residues include H169 and E171.

Belongs to the glutaminase PdxT/SNO family. In the presence of PdxS, forms a dodecamer of heterodimers. Only shows activity in the heterodimer.

It catalyses the reaction aldehydo-D-ribose 5-phosphate + D-glyceraldehyde 3-phosphate + L-glutamine = pyridoxal 5'-phosphate + L-glutamate + phosphate + 3 H2O + H(+). The catalysed reaction is L-glutamine + H2O = L-glutamate + NH4(+). Its pathway is cofactor biosynthesis; pyridoxal 5'-phosphate biosynthesis. Catalyzes the hydrolysis of glutamine to glutamate and ammonia as part of the biosynthesis of pyridoxal 5'-phosphate. The resulting ammonia molecule is channeled to the active site of PdxS. The protein is Pyridoxal 5'-phosphate synthase subunit PdxT of Fervidobacterium nodosum (strain ATCC 35602 / DSM 5306 / Rt17-B1).